The primary structure comprises 316 residues: 2,3-dihydroxyphenylpropionate/2,3-dihydroxicinnamic acid 1,2-dioxygenase (316 aa).

Catalysis depends on His115, which acts as the Proton donor. His180 serves as the catalytic Proton acceptor.

It belongs to the LigB/MhpB extradiol dioxygenase family. Homotetramer. Fe(2+) is required as a cofactor.

It catalyses the reaction 3-(2,3-dihydroxyphenyl)propanoate + O2 = (2Z,4E)-2-hydroxy-6-oxonona-2,4-dienedioate + H(+). The catalysed reaction is (2E)-3-(2,3-dihydroxyphenyl)prop-2-enoate + O2 = (2Z,4E,7E)-2-hydroxy-6-oxonona-2,4,7-trienedioate + H(+). It functions in the pathway aromatic compound metabolism; 3-phenylpropanoate degradation. Functionally, catalyzes the non-heme iron(II)-dependent oxidative cleavage of 2,3-dihydroxyphenylpropionic acid and 2,3-dihydroxicinnamic acid into 2-hydroxy-6-ketononadienedioate and 2-hydroxy-6-ketononatrienedioate, respectively. This chain is 2,3-dihydroxyphenylpropionate/2,3-dihydroxicinnamic acid 1,2-dioxygenase, found in Rhodococcus rhodochrous.